The sequence spans 486 residues: MSFANTSSTFEDKMCEGNRTAMASPQLLPLVVVLSSISLVTVGLNLLVLYAVHSERKLHTVGNLYIVSLSVADLIVGAVVMPMNILYLIMTKWSLGRPLCLFWLSMDYVASTASIFSVFILCIDRYRSVQQPLRYLRYRTKTRASATILGAWFFSFLWVIPILGWHHFMPPAPELREDKCETDFYNVTWFKIMTAIINFYLPTLLMLWFYVKIYKAVRRHCQHRQLTNGSLPSFSELKLRSDDTKEGAKKPGRESPWGVLKRPSRDPSVGLDQKSTSEDPKMTSPTVFSQEGERETRPCFRLDIMQKQSVAEGDVRGSKANDQALSQPKMDEQSLNTCRRISETSEDQTLVDQQSFSRTTDSDTSIEPGPGRVKSRSGSNSGLDYIKITWKRLRSHSRQYVSGLHLNRERKAAKQLGFIMAAFILCWIPYFIFFMVIAFCKSCCSEPMHMFTIWLGYINSTLNPLIYPLCNENFKKTFKKILHIRS.

Over 1-29 (MSFANTSSTFEDKMCEGNRTAMASPQLLP) the chain is Extracellular. 2 N-linked (GlcNAc...) asparagine glycosylation sites follow: Asn-5 and Asn-18. A helical membrane pass occupies residues 30-50 (LVVVLSSISLVTVGLNLLVLY). Over 51–64 (AVHSERKLHTVGNL) the chain is Cytoplasmic. Residues 65 to 89 (YIVSLSVADLIVGAVVMPMNILYLI) traverse the membrane as a helical segment. Topologically, residues 90–97 (MTKWSLGR) are extracellular. A helical transmembrane segment spans residues 98–123 (PLCLFWLSMDYVASTASIFSVFILCI). A disulfide bond links Cys-100 and Cys-180. Histamine is bound by residues Asp-107 and Thr-112. The interval 107–112 (DYVAST) is important for agonist binding. Topologically, residues 124–144 (DRYRSVQQPLRYLRYRTKTRA) are cytoplasmic. Phosphothreonine is present on residues Thr-140 and Thr-142. The chain crosses the membrane as a helical span at residues 145 to 164 (SATILGAWFFSFLWVIPILG). Over 165-188 (WHHFMPPAPELREDKCETDFYNVT) the chain is Extracellular. The chain crosses the membrane as a helical span at residues 189 to 211 (WFKIMTAIINFYLPTLLMLWFYV). A histamine-binding site is contributed by Asn-198. Over 212-415 (KIYKAVRRHC…LNRERKAAKQ (204 aa)) the chain is Cytoplasmic. Phosphoserine is present on Ser-230. Basic and acidic residues predominate over residues 241 to 253 (SDDTKEGAKKPGR). Disordered regions lie at residues 241 to 295 (SDDT…GERE) and 310 to 379 (VAEG…RSGS). Phosphoserine is present on residues Ser-342 and Ser-345. Over residues 347 to 365 (DQTLVDQQSFSRTTDSDTS) the composition is skewed to polar residues. A phosphoserine mark is found at Ser-379, Ser-381, Ser-395, and Ser-397. A helical membrane pass occupies residues 416–439 (LGFIMAAFILCWIPYFIFFMVIAF). Residues 423 to 427 (FILCW) are important for agonist binding. Tyr-430 is a binding site for histamine. Cys-440 and Cys-443 are disulfide-bonded. Topologically, residues 440 to 445 (CKSCCS) are extracellular. A helical membrane pass occupies residues 446–468 (EPMHMFTIWLGYINSTLNPLIYP). Over 469 to 486 (LCNENFKKTFKKILHIRS) the chain is Cytoplasmic.

The protein belongs to the G-protein coupled receptor 1 family. In terms of processing, phosphorylation at sites in the second and third cytoplasmic loops independently contribute to agonist-induced receptor down-regulation.

It localises to the cell membrane. G-protein-coupled receptor for histamine, a biogenic amine that functions as an immune modulator and a neurotransmitter. Through the H1 receptor, histamine mediates the contraction of smooth muscles and increases capillary permeability due to contraction of terminal venules. Also mediates neurotransmission in the central nervous system and thereby regulates circadian rhythms, emotional and locomotor activities as well as cognitive functions. The sequence is that of Histamine H1 receptor from Rattus norvegicus (Rat).